Here is a 77-residue protein sequence, read N- to C-terminus: Large ribosomal subunit protein eL20 (77 aa).

This sequence belongs to the eukaryotic ribosomal protein eL20 family. In terms of assembly, part of the 50S ribosomal subunit. Binds 23S rRNA.

This Thermococcus onnurineus (strain NA1) protein is Large ribosomal subunit protein eL20.